We begin with the raw amino-acid sequence, 513 residues long: UDP-N-acetylmuramyl-tripeptide synthetase (513 aa).

Ser-38 serves as a coordination point for UDP-N-acetyl-alpha-D-muramoyl-L-alanyl-D-glutamate. 115–121 provides a ligand contact to ATP; it reads GTKGKTT. Residues 161–162, Ser-188, and Arg-196 each bind UDP-N-acetyl-alpha-D-muramoyl-L-alanyl-D-glutamate; that span reads TT. Residue Lys-230 is modified to N6-carboxylysine.

It belongs to the MurCDEF family. MurE subfamily. In terms of processing, carboxylation is probably crucial for Mg(2+) binding and, consequently, for the gamma-phosphate positioning of ATP.

Its subcellular location is the cytoplasm. The protein operates within cell wall biogenesis; peptidoglycan biosynthesis. In terms of biological role, catalyzes the addition of an amino acid to the nucleotide precursor UDP-N-acetylmuramoyl-L-alanyl-D-glutamate (UMAG) in the biosynthesis of bacterial cell-wall peptidoglycan. This Latilactobacillus sakei subsp. sakei (strain 23K) (Lactobacillus sakei subsp. sakei) protein is UDP-N-acetylmuramyl-tripeptide synthetase.